A 171-amino-acid polypeptide reads, in one-letter code: Transcriptional repressor NrdR (171 aa).

A zinc finger spans residues 3 to 34 (CPFCGDPNTQVADTRENEGGEVVRRRRRCPKC). The 91-residue stretch at 49–139 (PHIVKRNGNR…VYRNFADVDE (91 aa)) folds into the ATP-cone domain. The disordered stretch occupies residues 148–171 (KARPKRNRPAEPPEPTSENDLFRS).

It belongs to the NrdR family. It depends on Zn(2+) as a cofactor.

Its function is as follows. Negatively regulates transcription of bacterial ribonucleotide reductase nrd genes and operons by binding to NrdR-boxes. The protein is Transcriptional repressor NrdR of Aromatoleum aromaticum (strain DSM 19018 / LMG 30748 / EbN1) (Azoarcus sp. (strain EbN1)).